Here is a 748-residue protein sequence, read N- to C-terminus: Junctophilin-3 (748 aa).

Over methionine 1 to isoleucine 727 the chain is Cytoplasmic. MORN repeat units follow at residues tyrosine 15 to glycine 37, tyrosine 39 to threonine 60, tyrosine 61 to valine 82, tyrosine 83 to alanine 105, tyrosine 107 to threonine 129, and tyrosine 130 to methionine 152. The tract at residues serine 230–aspartate 259 is disordered. Residues lysine 231–phenylalanine 244 show a composition bias toward low complexity. Positions glycine 249–aspartate 259 are enriched in polar residues. 2 MORN repeats span residues tyrosine 288–lysine 310 and tyrosine 311–lysine 333. The disordered stretch occupies residues alanine 416–asparagine 496. Serine 440 is subject to Phosphoserine. The span at serine 448–serine 457 shows a compositional bias: polar residues. At threonine 451 the chain carries Phosphothreonine. Serine 457 bears the Phosphoserine mark. Threonine 471 is subject to Phosphothreonine. Phosphoserine is present on residues serine 475 and serine 506. Disordered regions lie at residues cysteine 526–glycine 597 and histidine 624–glycine 649. The segment covering leucine 639–glycine 649 has biased composition (basic and acidic residues). A phosphoserine mark is found at serine 703 and serine 710. Residues leucine 728–isoleucine 748 form a helical; Anchor for type IV membrane protein membrane-spanning segment.

This sequence belongs to the junctophilin family. Specifically expressed in brain.

It localises to the cell membrane. Its subcellular location is the endoplasmic reticulum membrane. Its function is as follows. Junctophilins contribute to the formation of junctional membrane complexes (JMCs) which link the plasma membrane with the endoplasmic or sarcoplasmic reticulum in excitable cells. Provides a structural foundation for functional cross-talk between the cell surface and intracellular calcium release channels. JPH3 is brain-specific and appears to have an active role in certain neurons involved in motor coordination and memory. In Homo sapiens (Human), this protein is Junctophilin-3 (JPH3).